Reading from the N-terminus, the 68-residue chain is Large ribosomal subunit protein bL35 (68 aa).

Basic residues-rich tracts occupy residues 1 to 11 and 19 to 29; these read MPKLKTRSSAK and SGKVKHGKAFA. The segment at 1 to 54 is disordered; the sequence is MPKLKTRSSAKKRFDVKKSGKVKHGKAFAKHLFTFSKTPKSKRSNRGTGHLRDM.

Belongs to the bacterial ribosomal protein bL35 family.

In Myxococcus xanthus (strain DK1622), this protein is Large ribosomal subunit protein bL35.